We begin with the raw amino-acid sequence, 433 residues long: Ornithine decarboxylase 1B, chloroplastic (433 aa).

Lys-96 is modified (N6-(pyridoxal phosphate)lysine). Pyridoxal 5'-phosphate contacts are provided by residues Ser-228, Gly-266, and Glu-299–Arg-302. Tyr-342–Asp-343 lines the substrate pocket. Cys-378 functions as the Proton donor; shared with dimeric partner in the catalytic mechanism. Residue Asp-379 coordinates substrate. Tyr-407 is a binding site for pyridoxal 5'-phosphate.

Belongs to the Orn/Lys/Arg decarboxylase class-II family. Homodimer. Only the dimer is catalytically active, as the active sites are constructed of residues from both monomers. Pyridoxal 5'-phosphate serves as cofactor.

Its subcellular location is the plastid. It is found in the chloroplast. It carries out the reaction L-ornithine + H(+) = putrescine + CO2. It functions in the pathway alkaloid biosynthesis; nicotine biosynthesis. It participates in amine and polyamine biosynthesis; putrescine biosynthesis via L-ornithine pathway; putrescine from L-ornithine: step 1/1. Its function is as follows. Involved in the biosynthesis of pyridine alkaloid natural products, leading mainly to the production of anabasine, anatabine, nicotine and nornicotine, effective deterrents against herbivores with antiparasitic and pesticide properties (neurotoxins); nornicotine serves as the precursor in the synthesis of the carcinogen compound N'-nitrosonornicotine (NNN). Catalyzes the first and rate-limiting step of polyamine biosynthesis that converts ornithine into putrescine, which is the precursor for the polyamines, spermidine and spermine. Polyamines are essential for cell proliferation and are implicated in cellular processes, ranging from DNA replication to apoptosis. This chain is Ornithine decarboxylase 1B, chloroplastic, found in Nicotiana tabacum (Common tobacco).